The primary structure comprises 556 residues: Arginine--tRNA ligase (556 aa).

Residues 132-142 (ANPTGDLHLGH) carry the 'HIGH' region motif.

Belongs to the class-I aminoacyl-tRNA synthetase family. Monomer.

The protein localises to the cytoplasm. It carries out the reaction tRNA(Arg) + L-arginine + ATP = L-arginyl-tRNA(Arg) + AMP + diphosphate. In Bacillus subtilis (strain 168), this protein is Arginine--tRNA ligase (argS).